A 301-amino-acid chain; its full sequence is HTH-type transcriptional activator NagR (301 aa).

The 58-residue stretch at 6 to 63 (IDLNLLVVFNQLLLDRSVSTAGEKLGLTQPAVSNSLKRLRAALKDDLFLRTSKGMEPT) folds into the HTH lysR-type domain. Positions 23 to 42 (VSTAGEKLGLTQPAVSNSLK) form a DNA-binding region, H-T-H motif.

Belongs to the LysR transcriptional regulatory family.

Functionally, may regulate the expression of the naphthalene (nagA-F) and salicylate (nagG-M) metabolism genes. The sequence is that of HTH-type transcriptional activator NagR from Ralstonia sp.